Consider the following 185-residue polypeptide: V-type proton ATPase subunit E (185 aa).

The protein belongs to the V-ATPase E subunit family.

Its function is as follows. Produces ATP from ADP in the presence of a proton gradient across the membrane. In Deinococcus deserti (strain DSM 17065 / CIP 109153 / LMG 22923 / VCD115), this protein is V-type proton ATPase subunit E.